The primary structure comprises 301 residues: NADH-cytochrome b5 reductase 2 (301 aa).

Residues 14-30 (FLVPFAGATALSIGLAL) form a helical membrane-spanning segment. The FAD-binding FR-type domain occupies 51-155 (NEWVDLKLSK…KGPIVKWKWE (105 aa)). An FAD-binding site is contributed by 158-193 (QFKSIALIGGGTGITPLYQLLHQITSNPKDNTKVNL).

Belongs to the flavoprotein pyridine nucleotide cytochrome reductase family. FAD is required as a cofactor.

It localises to the mitochondrion outer membrane. The enzyme catalyses 2 Fe(III)-[cytochrome b5] + NADH = 2 Fe(II)-[cytochrome b5] + NAD(+) + H(+). May mediate the reduction of outer membrane cytochrome b5. The protein is NADH-cytochrome b5 reductase 2 (MCR1) of Candida albicans (strain SC5314 / ATCC MYA-2876) (Yeast).